A 445-amino-acid polypeptide reads, in one-letter code: Tripartite motif-containing protein 43B (445 aa).

The RING-type zinc finger occupies 16–57 (CSICQGIFMNPVYLKCGHKFCEACLLLFQEDIKFPAYCPMCM). The B box-type zinc finger occupies 88–129 (SEEHKCVTHKAKKMIFCDKSKILLCHLCSDSQEHSGHTHCSI). Zn(2+) is bound by residues cysteine 93, histidine 96, cysteine 115, and histidine 121. Positions 271 to 445 (RLRAHSIPGL…VRPFFSAVYT (175 aa)) constitute a B30.2/SPRY domain.

It belongs to the TRIM/RBCC family.

The polypeptide is Tripartite motif-containing protein 43B (Mus musculus (Mouse)).